Here is a 232-residue protein sequence, read N- to C-terminus: Large ribosomal subunit protein uL1 (232 aa).

It belongs to the universal ribosomal protein uL1 family. Part of the 50S ribosomal subunit.

Its function is as follows. Binds directly to 23S rRNA. The L1 stalk is quite mobile in the ribosome, and is involved in E site tRNA release. Functionally, protein L1 is also a translational repressor protein, it controls the translation of the L11 operon by binding to its mRNA. This is Large ribosomal subunit protein uL1 from Dinoroseobacter shibae (strain DSM 16493 / NCIMB 14021 / DFL 12).